A 260-amino-acid chain; its full sequence is NAD-capped RNA hydrolase NudC (260 aa).

Positions 25 and 69 each coordinate substrate. Cys-98 and Cys-101 together coordinate Zn(2+). Glu-111 is a substrate binding site. 2 residues coordinate Zn(2+): Cys-116 and Cys-119. Tyr-124 contributes to the substrate binding site. The region spanning 125–248 (PQIAPCVIVA…TVARRLIEDT (124 aa)) is the Nudix hydrolase domain. A divalent metal cation is bound by residues Ala-158, Glu-174, and Glu-178. Positions 159–180 (GFVEVGETLEQAVSREVLEESN) match the Nudix box motif. 192–199 (QPWPFPHS) contacts substrate. Glu-219 provides a ligand contact to a divalent metal cation. Residue Ala-241 participates in substrate binding.

The protein belongs to the Nudix hydrolase family. NudC subfamily. In terms of assembly, homodimer. Mg(2+) serves as cofactor. The cofactor is Mn(2+). Zn(2+) is required as a cofactor.

The catalysed reaction is a 5'-end NAD(+)-phospho-ribonucleoside in mRNA + H2O = a 5'-end phospho-adenosine-phospho-ribonucleoside in mRNA + beta-nicotinamide D-ribonucleotide + 2 H(+). It carries out the reaction NAD(+) + H2O = beta-nicotinamide D-ribonucleotide + AMP + 2 H(+). It catalyses the reaction NADH + H2O = reduced beta-nicotinamide D-ribonucleotide + AMP + 2 H(+). In terms of biological role, mRNA decapping enzyme that specifically removes the nicotinamide adenine dinucleotide (NAD) cap from a subset of mRNAs by hydrolyzing the diphosphate linkage to produce nicotinamide mononucleotide (NMN) and 5' monophosphate mRNA. The NAD-cap is present at the 5'-end of some mRNAs and stabilizes RNA against 5'-processing. Has preference for mRNAs with a 5'-end purine. Catalyzes the hydrolysis of a broad range of dinucleotide pyrophosphates. This chain is NAD-capped RNA hydrolase NudC, found in Yersinia pseudotuberculosis serotype O:1b (strain IP 31758).